Reading from the N-terminus, the 525-residue chain is Zinc finger C2HC domain-containing protein 1C (525 aa).

The segment covering 23-34 (AHGLHSAKHDPY) has biased composition (basic and acidic residues). Disordered stretches follow at residues 23–48 (AHGL…MGHL), 85–107 (CPHS…GKGL), and 145–171 (VHRK…PDSS). A compositionally biased stretch (polar residues) spans 36-48 (QSDSPQRSSMGHL). The segment covering 90-102 (GISQQGSGNNAQG) has biased composition (low complexity). The stretch at 207-252 (TQIQRLEAAGESLQKEIRRKEILLREKLKKTEEGLRRIQREKKQAI) forms a coiled coil. Disordered stretches follow at residues 292-316 (SRNR…LSDY), 330-349 (NNKI…SQPA), and 356-379 (LQAS…EQEL). The segment covering 301 to 312 (CEQAQENSSPLQ) has biased composition (polar residues). The span at 359 to 373 (SSLSGTPGSSGSSSS) shows a compositional bias: low complexity. 2 consecutive C2HC/C3H-type zinc fingers follow at residues 378–407 (ELGK…MQGS) and 487–516 (DYVQ…IKNR). The Zn(2+) site is built by cysteine 382, cysteine 385, histidine 397, cysteine 401, cysteine 491, cysteine 494, histidine 506, and cysteine 510.

This sequence belongs to the ZC2HC1 family. The cofactor is Zn(2+).

In Rattus norvegicus (Rat), this protein is Zinc finger C2HC domain-containing protein 1C (Zc2hc1c).